The following is a 367-amino-acid chain: tRNA 2-selenouridine synthase (367 aa).

The Rhodanese domain maps to 12-136 (FLNDRPLMDA…LRGFLIDTLE (125 aa)). Cysteine 95 serves as the catalytic S-selanylcysteine intermediate.

Belongs to the SelU family. As to quaternary structure, monomer.

It carries out the reaction 5-methylaminomethyl-2-thiouridine(34) in tRNA + selenophosphate + (2E)-geranyl diphosphate + H2O + H(+) = 5-methylaminomethyl-2-selenouridine(34) in tRNA + (2E)-thiogeraniol + phosphate + diphosphate. It catalyses the reaction 5-methylaminomethyl-2-thiouridine(34) in tRNA + (2E)-geranyl diphosphate = 5-methylaminomethyl-S-(2E)-geranyl-thiouridine(34) in tRNA + diphosphate. The catalysed reaction is 5-methylaminomethyl-S-(2E)-geranyl-thiouridine(34) in tRNA + selenophosphate + H(+) = 5-methylaminomethyl-2-(Se-phospho)selenouridine(34) in tRNA + (2E)-thiogeraniol. The enzyme catalyses 5-methylaminomethyl-2-(Se-phospho)selenouridine(34) in tRNA + H2O = 5-methylaminomethyl-2-selenouridine(34) in tRNA + phosphate. In terms of biological role, involved in the post-transcriptional modification of the uridine at the wobble position (U34) of tRNA(Lys), tRNA(Glu) and tRNA(Gln). Catalyzes the conversion of 2-thiouridine (S2U-RNA) to 2-selenouridine (Se2U-RNA). Acts in a two-step process involving geranylation of 2-thiouridine (S2U) to S-geranyl-2-thiouridine (geS2U) and subsequent selenation of the latter derivative to 2-selenouridine (Se2U) in the tRNA chain. The chain is tRNA 2-selenouridine synthase from Pseudomonas fluorescens (strain Pf0-1).